A 371-amino-acid polypeptide reads, in one-letter code: 2-aminoethylphosphonate--pyruvate transaminase (371 aa).

The residue at position 195 (Lys-195) is an N6-(pyridoxal phosphate)lysine.

This sequence belongs to the class-V pyridoxal-phosphate-dependent aminotransferase family. PhnW subfamily. Homodimer. Pyridoxal 5'-phosphate serves as cofactor.

It catalyses the reaction (2-aminoethyl)phosphonate + pyruvate = phosphonoacetaldehyde + L-alanine. Functionally, involved in phosphonate degradation. The polypeptide is 2-aminoethylphosphonate--pyruvate transaminase (Pseudomonas aeruginosa (strain UCBPP-PA14)).